Here is a 94-residue protein sequence, read N- to C-terminus: Trp operon repressor homolog (94 aa).

Residues 58-81 (QREIAEKYGVSIAQITRGSNALKG) mediate DNA binding.

The protein belongs to the TrpR family. Homodimer.

The protein resides in the cytoplasm. In terms of biological role, this protein is an aporepressor. When complexed with L-tryptophan it binds the operator region of the trp operon and prevents the initiation of transcription. The polypeptide is Trp operon repressor homolog (Chlamydia trachomatis serovar L2 (strain ATCC VR-902B / DSM 19102 / 434/Bu)).